A 305-amino-acid polypeptide reads, in one-letter code: Tyrosine recombinase XerD (305 aa).

The 86-residue stretch at 3 to 88 (PADASVIERF…TLRAFYGLCL (86 aa)) folds into the Core-binding (CB) domain. In terms of domain architecture, Tyr recombinase spans 109–299 (SLPKALTESQ…ARQHLQKLHA (191 aa)). Catalysis depends on residues Arg149, Lys173, His251, Arg254, and His277. The O-(3'-phospho-DNA)-tyrosine intermediate role is filled by Tyr286.

The protein belongs to the 'phage' integrase family. XerD subfamily. As to quaternary structure, forms a cyclic heterotetrameric complex composed of two molecules of XerC and two molecules of XerD.

The protein localises to the cytoplasm. Functionally, site-specific tyrosine recombinase, which acts by catalyzing the cutting and rejoining of the recombining DNA molecules. The XerC-XerD complex is essential to convert dimers of the bacterial chromosome into monomers to permit their segregation at cell division. It also contributes to the segregational stability of plasmids. The protein is Tyrosine recombinase XerD of Xanthomonas axonopodis pv. citri (strain 306).